Reading from the N-terminus, the 647-residue chain is 1-deoxy-D-xylulose-5-phosphate synthase (647 aa).

Residues His-88 and 129-131 each bind thiamine diphosphate; that span reads GHA. Residue Asp-160 participates in Mg(2+) binding. Thiamine diphosphate-binding positions include 161 to 162, Asn-189, Tyr-300, and Glu-377; that span reads GA. Residue Asn-189 participates in Mg(2+) binding.

The protein belongs to the transketolase family. DXPS subfamily. Homodimer. Mg(2+) is required as a cofactor. It depends on thiamine diphosphate as a cofactor.

The enzyme catalyses D-glyceraldehyde 3-phosphate + pyruvate + H(+) = 1-deoxy-D-xylulose 5-phosphate + CO2. It functions in the pathway metabolic intermediate biosynthesis; 1-deoxy-D-xylulose 5-phosphate biosynthesis; 1-deoxy-D-xylulose 5-phosphate from D-glyceraldehyde 3-phosphate and pyruvate: step 1/1. Its function is as follows. Catalyzes the acyloin condensation reaction between C atoms 2 and 3 of pyruvate and glyceraldehyde 3-phosphate to yield 1-deoxy-D-xylulose-5-phosphate (DXP). The protein is 1-deoxy-D-xylulose-5-phosphate synthase of Dehalococcoides mccartyi (strain CBDB1).